Here is a 609-residue protein sequence, read N- to C-terminus: Glutamine--fructose-6-phosphate aminotransferase [isomerizing] (609 aa).

The Nucleophile; for GATase activity role is filled by Cys-2. A Glutamine amidotransferase type-2 domain is found at Cys-2–Gly-219. SIS domains are found at residues Ile-280–Thr-426 and Trp-458–Pro-599. The For Fru-6P isomerization activity role is filled by Lys-604.

In terms of assembly, homodimer.

It localises to the cytoplasm. The enzyme catalyses D-fructose 6-phosphate + L-glutamine = D-glucosamine 6-phosphate + L-glutamate. In terms of biological role, catalyzes the first step in hexosamine metabolism, converting fructose-6P into glucosamine-6P using glutamine as a nitrogen source. This chain is Glutamine--fructose-6-phosphate aminotransferase [isomerizing], found in Chlamydia caviae (strain ATCC VR-813 / DSM 19441 / 03DC25 / GPIC) (Chlamydophila caviae).